Reading from the N-terminus, the 220-residue chain is FMN-dependent NADH:quinone oxidoreductase 1 (220 aa).

18–20 (SVS) is a binding site for FMN.

It belongs to the azoreductase type 1 family. As to quaternary structure, homodimer. Requires FMN as cofactor.

The catalysed reaction is 2 a quinone + NADH + H(+) = 2 a 1,4-benzosemiquinone + NAD(+). It catalyses the reaction N,N-dimethyl-1,4-phenylenediamine + anthranilate + 2 NAD(+) = 2-(4-dimethylaminophenyl)diazenylbenzoate + 2 NADH + 2 H(+). Quinone reductase that provides resistance to thiol-specific stress caused by electrophilic quinones. Functionally, also exhibits azoreductase activity. Catalyzes the reductive cleavage of the azo bond in aromatic azo compounds to the corresponding amines. The polypeptide is FMN-dependent NADH:quinone oxidoreductase 1 (Bacillus anthracis).